The sequence spans 128 residues: L-ectoine synthase (128 aa).

The protein belongs to the ectoine synthase family.

The catalysed reaction is (2S)-4-acetamido-2-aminobutanoate = L-ectoine + H2O. Its pathway is amine and polyamine biosynthesis; ectoine biosynthesis; L-ectoine from L-aspartate 4-semialdehyde: step 3/3. In terms of biological role, catalyzes the circularization of gamma-N-acetyl-alpha,gamma-diaminobutyric acid (ADABA) to ectoine (1,4,5,6-tetrahydro-2-methyl-4-pyrimidine carboxylic acid), which is an excellent osmoprotectant. This chain is L-ectoine synthase, found in Aliivibrio fischeri (strain MJ11) (Vibrio fischeri).